The sequence spans 227 residues: NADH-quinone oxidoreductase subunit C (227 aa).

This sequence belongs to the complex I 30 kDa subunit family. As to quaternary structure, NDH-1 is composed of 14 different subunits. Subunits NuoB, C, D, E, F, and G constitute the peripheral sector of the complex.

It localises to the cell inner membrane. The catalysed reaction is a quinone + NADH + 5 H(+)(in) = a quinol + NAD(+) + 4 H(+)(out). Its function is as follows. NDH-1 shuttles electrons from NADH, via FMN and iron-sulfur (Fe-S) centers, to quinones in the respiratory chain. The immediate electron acceptor for the enzyme in this species is believed to be ubiquinone. Couples the redox reaction to proton translocation (for every two electrons transferred, four hydrogen ions are translocated across the cytoplasmic membrane), and thus conserves the redox energy in a proton gradient. The polypeptide is NADH-quinone oxidoreductase subunit C (Coxiella burnetii (strain RSA 331 / Henzerling II)).